We begin with the raw amino-acid sequence, 682 residues long: Two-component system protein A (682 aa).

A disordered region spans residues 11–41 (SLDDNDNGQQHQDEVQAKHQDQGHTCPSRPS). A compositionally biased stretch (basic and acidic residues) spans 21-32 (HQDEVQAKHQDQ). PAS domains are found at residues 45–105 (LSRI…PILY) and 166–239 (MNET…LREG). The region spanning 241-292 (IEDEGWRYRRDGSRFWANVLITPIYQFGQHVGFVKVTRDLTERKEAEACMIA) is the PAC domain. The Histidine kinase domain occupies 307-530 (NISHEIRTPM…VFWFTAKMGG (224 aa)). H310 carries the phosphohistidine; by autocatalysis modification. One can recognise a Response regulatory domain in the interval 563–680 (HVLLVEDNIV…QLLRVLWKWF (118 aa)). A 4-aspartylphosphate modification is found at D615.

Post-translationally, activation probably requires a transfer of a phosphate group between a His in the histidine kinase domain and an Asp of the response regulatory domain.

It is found in the cytoplasm. It carries out the reaction ATP + protein L-histidine = ADP + protein N-phospho-L-histidine.. Functionally, may be part of a two-component regulatory system required for formation of conidia on certain growth media. The chain is Two-component system protein A from Emericella nidulans (strain FGSC A4 / ATCC 38163 / CBS 112.46 / NRRL 194 / M139) (Aspergillus nidulans).